The primary structure comprises 204 residues: Thymidylate kinase (204 aa).

An ATP-binding site is contributed by 9-16 (GIEASGKT).

It belongs to the thymidylate kinase family.

It catalyses the reaction dTMP + ATP = dTDP + ADP. Its function is as follows. Phosphorylation of dTMP to form dTDP in both de novo and salvage pathways of dTTP synthesis. The chain is Thymidylate kinase from Sulfurihydrogenibium sp. (strain YO3AOP1).